A 468-amino-acid polypeptide reads, in one-letter code: Dihydrolipoyl dehydrogenase (468 aa).

FAD-binding positions include 39 to 47 (EKGNLGGVC), Lys-56, and Ala-119. A disulfide bridge connects residues Cys-47 and Cys-52. NAD(+)-binding positions include 183-187 (GGGYI), Glu-206, and 271-274 (TVGR). FAD contacts are provided by Asp-314 and Ala-322. The active-site Proton acceptor is His-446.

This sequence belongs to the class-I pyridine nucleotide-disulfide oxidoreductase family. In terms of assembly, homodimer. FAD is required as a cofactor.

It is found in the cytoplasm. The protein localises to the membrane. It catalyses the reaction N(6)-[(R)-dihydrolipoyl]-L-lysyl-[protein] + NAD(+) = N(6)-[(R)-lipoyl]-L-lysyl-[protein] + NADH + H(+). Its function is as follows. Lipoamide dehydrogenase is a component of the alpha-ketoacid dehydrogenase complexes. This chain is Dihydrolipoyl dehydrogenase (pdhD), found in Staphylococcus aureus (strain COL).